A 251-amino-acid chain; its full sequence is Aquaporin (251 aa).

The Cytoplasmic segment spans residues 1 to 11; sequence MAGETLRKIQS. Residues 12 to 32 form a helical membrane-spanning segment; sequence LLGEMVASFIFGFAVYSAILG. Topologically, residues 33–42 are extracellular; the sequence is STIAQQPAAK. A helical membrane pass occupies residues 43–63; that stretch reads VIIGLTVGFSAIGIIYSFSDV. Residues 64–86 are Cytoplasmic-facing; that stretch reads TIAHFNPAITLAAILTGKMGILC. Residues 69 to 71 carry the NPA motif; it reads NPA. The helical transmembrane segment at 87–107 threads the bilayer; that stretch reads GLGYMLAQCVGFILAVCALLV. Over 108 to 133 the chain is Extracellular; it reads CSPVGYKETLNVIRPAPAPFGADNLN. Residues 134 to 154 form a helical membrane-spanning segment; it reads VFFTEFFLTAILVHIAFAVAV. Residues 155–179 lie on the Cytoplasmic side of the membrane; that stretch reads NPYRPKVDTDGKFVDPDEKEPVDRR. A helical membrane pass occupies residues 180-200; the sequence is ITAPLCIGLTLGFLAFMGLVT. Residues 201-224 lie on the Extracellular side of the membrane; the sequence is SGGAFNPGLTLAPVIMSNTWQHFW. The short motif at 206-208 is the NPG element; the sequence is NPG. Residues 225–245 traverse the membrane as a helical segment; the sequence is LYLGAQYLGGLVGGLLQVFVL. Residues 246–251 are Cytoplasmic-facing; that stretch reads YKLSSN.

It belongs to the MIP/aquaporin (TC 1.A.8) family.

The protein localises to the cell membrane. Water channel required to facilitate the transport of water across membranes. Involved in osmotolerance. The sequence is that of Aquaporin (AQP) from Encephalitozoon hellem (Microsporidian parasite).